A 63-amino-acid chain; its full sequence is Anionic peptide NDBP7 (63 aa).

Positions 1–20 (MISRFCLLFLLVFVVSKIQA) are cleaved as a signal peptide.

This sequence belongs to the non-disulfide-bridged peptide (NDBP) superfamily. Long chain multifunctional peptide (group 2) family. In terms of tissue distribution, expressed by the venom gland.

It is found in the secreted. This chain is Anionic peptide NDBP7, found in Lychas mucronatus (Chinese swimming scorpion).